The sequence spans 343 residues: Galactoside alpha-(1,2)-fucosyltransferase 2 (343 aa).

At 1–14 the chain is on the cytoplasmic side; sequence MLVVQMPFSFPMAH. Residues 15 to 28 traverse the membrane as a helical; Signal-anchor for type II membrane protein segment; the sequence is FILFVFTVSTIFHV. At 29–343 the chain is on the lumenal side; sequence QQRLAKIQAM…AADLSPLLKH (315 aa). Asn-188, Asn-282, and Asn-308 each carry an N-linked (GlcNAc...) asparagine glycan.

It belongs to the glycosyltransferase 11 family.

It localises to the golgi apparatus. Its subcellular location is the golgi stack membrane. It carries out the reaction a beta-D-galactosyl-(1-&gt;3)-N-acetyl-beta-D-glucosaminyl derivative + GDP-beta-L-fucose = an alpha-L-Fuc-(1-&gt;2)-beta-D-Gal-(1-&gt;3)-beta-D-GlcNAc derivative + GDP + H(+). It catalyses the reaction a beta-D-galactosyl-(1-&gt;4)-N-acetyl-beta-D-glucosaminyl derivative + GDP-beta-L-fucose = an alpha-L-Fuc-(1-&gt;2)-beta-D-Gal-(1-&gt;4)-beta-D-GlcNAc derivative + GDP + H(+). The enzyme catalyses a neolactoside nLc4Cer + GDP-beta-L-fucose = a neolactoside IV(2)-alpha-Fuc-nLc4Cer + GDP + H(+). The catalysed reaction is a neolactoside nLc4Cer(d18:1(4E)) + GDP-beta-L-fucose = a neolactoside IV(2)-alpha-Fuc-nLc4Cer(d18:1(4E)) + GDP + H(+). It carries out the reaction a ganglioside GM1 + GDP-beta-L-fucose = a ganglioside Fuc-GM1 + GDP + H(+). It catalyses the reaction a ganglioside GA1 + GDP-beta-L-fucose = a ganglioside Fuc-GA1 + GDP + H(+). The enzyme catalyses Lc4Cer + GDP-beta-L-fucose = alpha-L-fucosyl-(1-&gt;2)-beta-D-galactosyl-(1-&gt;3)-N-acetyl-beta-D-glucosaminyl-(1-&gt;3)-beta-D-galactosyl-(1-&gt;4)-beta-D-glucosyl-(1&lt;-&gt;1')-ceramide + GDP + H(+). The catalysed reaction is a beta-D-Gal-(1-&gt;3)-beta-D-GlcNAc-(1-&gt;3)-beta-D-Gal-(1-&gt;4)-beta-D-Glc-(1&lt;-&gt;1')-Cer(d18:1(4E)) + GDP-beta-L-fucose = alpha-L-fucosyl-(1-&gt;2)- beta-D-galactosyl-(1-&gt;3)-N-acetyl-beta-D-glucosaminyl-(1-&gt;3)-beta-D-galactosyl-(1-&gt;4)-beta-D-glucosyl-(1&lt;-&gt;1')-N-acylsphing-4-enine + GDP + H(+). It carries out the reaction a ganglioside GD1b + GDP-beta-L-fucose = a ganglioside Fuc-GD1b + GDP + H(+). It catalyses the reaction a ganglioside GM1 (d18:1(4E)) + GDP-beta-L-fucose = a ganglioside Fuc-GM1 (d18:1(4E)) + GDP + H(+). The enzyme catalyses a globoside GalGb4Cer (d18:1(4E)) + GDP-beta-L-fucose = a globoside Globo-H (d18:1(4E)) + GDP + H(+). The catalysed reaction is a lactoside III(4)-a-Fuc-Lc4Cer + GDP-beta-L-fucose = a lactoside IV(2),III(4)-a-[Fuc]2-Lc4Cer + GDP + H(+). It carries out the reaction beta-D-galactosyl-(1-&gt;3)-N-acetyl-D-galactosamine + GDP-beta-L-fucose = alpha-L-fucosyl-(1-&gt;2)-beta-D-galactosyl-(1-&gt;3)-N-acetyl-D-galactosamine + GDP + H(+). It participates in protein modification; protein glycosylation. Its function is as follows. Catalyzes the transfer of L-fucose, from a guanosine diphosphate-beta-L-fucose, to the terminal galactose on both O- and N-linked glycans chains of cell surface glycoproteins and glycolipids and the resulting epitope regulates several processes such as cell-cell interaction including host-microbe interaction, cell surface expression and cell proliferation. Preferentially fucosylates gangliosides GA1 and GM1 in the antrum, cecum and colon and in the female reproductive organs. Fucosylated host glycoproteins or glycolipids mediate interaction with intestinal microbiota influencing its composition. Creates a soluble precursor oligosaccharide FuC-alpha ((1,2)Galbeta-) called the H antigen which is an essential substrate for the final step in the soluble ABO blood group antigen synthesis pathway. This chain is Galactoside alpha-(1,2)-fucosyltransferase 2, found in Gorilla gorilla gorilla (Western lowland gorilla).